The following is a 355-amino-acid chain: Guanine nucleotide-binding protein G(q) subunit alpha (355 aa).

Residue C3 is the site of S-palmitoyl cysteine attachment. A G-alpha domain is found at 32–355 (KEIKLLLLGT…QHITEVVPGL (324 aa)). The tract at residues 35–48 (KLLLLGTGESGKST) is G1 motif. GTP is bound by residues 40 to 47 (GTGESGKS), 174 to 180 (LRVRVPT), 199 to 203 (DVGGQ), 269 to 272 (NKKD), and A326. The Mg(2+) site is built by S47 and T180. The tract at residues 172-180 (DVLRVRVPT) is G2 motif. Residues 195–204 (FKMVDVGGQR) form a G3 motif region. Residues 265-272 (ILFLNKKD) are G4 motif. The G5 motif stretch occupies residues 324–329 (TCATDT).

It belongs to the G-alpha family. G(q) subfamily. G proteins are composed of 3 units; alpha, beta and gamma. The alpha chain contains the guanine nucleotide binding site.

Functionally, guanine nucleotide-binding proteins (G proteins) are involved as modulators or transducers in various transmembrane signaling systems. This is Guanine nucleotide-binding protein G(q) subunit alpha from Geodia cydonium (Sponge).